Reading from the N-terminus, the 270-residue chain is Putative ABC transporter ATP-binding protein MG304 (270 aa).

The ABC transporter domain maps to 1-232; sequence MLQVKNLSFK…LDLFHNHHFN (232 aa). Position 36 to 43 (36 to 43) interacts with ATP; that stretch reads GHNGSGKS.

The protein belongs to the ABC transporter superfamily.

This Mycoplasma genitalium (strain ATCC 33530 / DSM 19775 / NCTC 10195 / G37) (Mycoplasmoides genitalium) protein is Putative ABC transporter ATP-binding protein MG304.